Here is a 677-residue protein sequence, read N- to C-terminus: Potassium channel KAT1 (677 aa).

The Cytoplasmic segment spans residues 1–63 (MSISWTRNFF…PFNPRYRAWE (63 aa)). The helical transmembrane segment at 64–84 (MWLVLLVIYSAWICPFQFAFI) threads the bilayer. At 85–90 (TYKKDA) the chain is on the extracellular side. Residues 91–111 (IFIIDNIVNGFFAIDIILTFF) traverse the membrane as a helical segment. Over 112-134 (VAYLDSHSYLLVDSPKKIAIRYL) the chain is Cytoplasmic. Residues 135-155 (STWFAFDVCSTAPFQPLSLLF) form a helical membrane-spanning segment. At 156 to 165 (NYNGSELGFR) the chain is on the extracellular side. Residues 166–186 (ILSMLRLWRLRRVSSLFARLE) traverse the membrane as a helical; Voltage-sensor segment. Topologically, residues 187-200 (KDIRFNYFWIRCTK) are cytoplasmic. A helical transmembrane segment spans residues 201-221 (LISVTLFAIHCAGCFNYLIAD). The Extracellular portion of the chain corresponds to 222–248 (RYPNPRKTWIGAVYPNFKEASLWNRYV). The pore-forming intramembrane region spans 249 to 268 (TALYWSITTLTTTGYGDFHA). The Extracellular segment spans residues 269-272 (ENPR). The chain crosses the membrane as a helical span at residues 273-293 (EMLFDIFFMMFNLGLTAYLIG). Over 294–677 (NMTNLVVHWT…DGDHLYFSSN (384 aa)) the chain is Cytoplasmic. Residue 377 to 496 (LFQGVSRNFL…RVIMNNLFMK (120 aa)) participates in a nucleoside 3',5'-cyclic phosphate binding. Residues 568 to 577 (IERAKVERSS) are compositionally biased toward basic and acidic residues. The tract at residues 568–601 (IERAKVERSSSETAGRSYANDSSKKDPYCSSSNQ) is disordered. The 66-residue stretch at 612-677 (RVTIHMMSES…DGDHLYFSSN (66 aa)) folds into the KHA domain.

It belongs to the potassium channel family. Plant (TC 1.A.1.4) subfamily. In terms of assembly, the potassium channel is probably composed of a homo- or heterotetrameric complex of pore-forming subunits. May interact with AKT2 and KAT2. Interacts with SLAC1 and SLAH3. As to expression, expressed in guard cells, and in roots.

The protein localises to the membrane. Its function is as follows. Highly selective inward-rectifying potassium channel. This voltage-gated channel could mediate long-term potassium influx into guard cells leading to stomatal opening. Assuming opened or closed conformations in response to the voltage difference across the membrane, the channel is activated by hyperpolarization. The channel activity is enhanced upon external acidification. Also permeable to ammonium ions. Blocked by tetraethylammonium and barium ions. The protein is Potassium channel KAT1 (KAT1) of Arabidopsis thaliana (Mouse-ear cress).